A 1197-amino-acid polypeptide reads, in one-letter code: Disease resistance-like protein CSA1 (1197 aa).

Residues 15 to 178 form the TIR domain; the sequence is PQDQVFINFR…IIIRKVKEIL (164 aa). The active site involves Glu-89. One can recognise an NB-ARC domain in the interval 210–480; sequence RIKQLEEKLR…ACFRSQDENY (271 aa). 10 LRR repeats span residues 614-636, 638-659, 694-716, 728-749, 750-774, 776-796, 797-819, 820-843, 845-862, and 863-889; these read LNEVRYLHWLKFPLKEVPQDFNP, NLVDLKLPYSEIERVWEDNKDA, TALKEMHVDMENMKFLVFLNLRG, LISLKTLILSGCSKFKTFQVIS, DKLEALYLDGTAIKELPCDIGRLQR, VMLNMKGCKKLKRLPDSLGQL, KALEELILSGCSKLNEFPETWGN, MSRLEILLLDETAIKDMPKILSVR, LCLNKNEKISRLPDLLNK, and FSQLQWLHLKYCKNLTHVPQLPPNLQY.

The enzyme catalyses NAD(+) + H2O = ADP-D-ribose + nicotinamide + H(+). Its function is as follows. TIR-NB-LRR receptor-like protein that functions in photomorphogenic development. May function downstream of phytochrome B (phyB) signaling. This is Disease resistance-like protein CSA1 from Arabidopsis thaliana (Mouse-ear cress).